The following is a 152-amino-acid chain: 3-hydroxyacyl-[acyl-carrier-protein] dehydratase FabZ (152 aa).

H54 is a catalytic residue.

The protein belongs to the thioester dehydratase family. FabZ subfamily.

It is found in the cytoplasm. The catalysed reaction is a (3R)-hydroxyacyl-[ACP] = a (2E)-enoyl-[ACP] + H2O. Its function is as follows. Involved in unsaturated fatty acids biosynthesis. Catalyzes the dehydration of short chain beta-hydroxyacyl-ACPs and long chain saturated and unsaturated beta-hydroxyacyl-ACPs. The sequence is that of 3-hydroxyacyl-[acyl-carrier-protein] dehydratase FabZ from Roseobacter denitrificans (strain ATCC 33942 / OCh 114) (Erythrobacter sp. (strain OCh 114)).